A 694-amino-acid polypeptide reads, in one-letter code: GRB2-associated-binding protein 1 (694 aa).

The residue at position 2 (Ser2) is an N-acetylserine. The PH domain maps to 5–116 (EVVCSGWLRK…WVRCICDICG (112 aa)). Basic and acidic residues predominate over residues 194-203 (PEPTRTHADS). The disordered stretch occupies residues 194 to 231 (PEPTRTHADSAKSTSSETDCNDNVPSHKNPASSQSKHG). A compositionally biased stretch (polar residues) spans 204–230 (AKSTSSETDCNDNVPSHKNPASSQSKH). Residues Ser251, Ser253, Ser266, and Ser304 each carry the phosphoserine modification. The disordered stretch occupies residues 309–378 (IPPTPGNTYQ…TDSSYCIPTA (70 aa)). Positions 358-374 (DTCSITRTASDTDSSYC) are enriched in polar residues. Position 387 is a phosphothreonine (Thr387). Ser402 and Ser454 each carry phosphoserine. 2 disordered regions span residues 492-532 (PAHM…VKPA) and 560-656 (DSSR…ADER). Polar residues predominate over residues 594 to 611 (PNLSSEDSNLFGSNSLDG). Position 627 is a phosphotyrosine (Tyr627). Thr638 is subject to Phosphothreonine. Phosphoserine is present on Ser651. Tyr659 is modified (phosphotyrosine). Positions 668–694 (LALKSTREAWTDGRQSTESETPAKNVK) are disordered. Residues 672-684 (STREAWTDGRQST) are compositionally biased toward basic and acidic residues. At Ser683 the chain carries Phosphoserine. Positions 685 to 694 (ESETPAKNVK) are enriched in polar residues.

The protein belongs to the GAB family. Identified in a complex containing FRS2, GRB2, GAB1, PIK3R1 and SOS1. Forms a tripartite complex containing GAB1, METTL13 and SPRY2. Within the complex interacts with METTL13. Interacts with GRB2 and with other SH2-containing proteins. Interacts with phosphorylated LAT2. Interacts with PTPRJ. Interacts (phosphorylated) with PTPN11. Interacts with HCK. Phosphorylated in response to FGFR1 activation. Phosphorylated on tyrosine residue(s) by the epidermal growth factor receptor (EGFR) and the insulin receptor (INSR). Tyrosine phosphorylation of GAB1 mediates interaction with several proteins that contain SH2 domains. Phosphorylated on tyrosine residues by HCK upon IL6 signaling.

Functionally, adapter protein that plays a role in intracellular signaling cascades triggered by activated receptor-type kinases. Plays a role in FGFR1 signaling. Probably involved in signaling by the epidermal growth factor receptor (EGFR) and the insulin receptor (INSR). Involved in the MET/HGF-signaling pathway. In Bos taurus (Bovine), this protein is GRB2-associated-binding protein 1 (GAB1).